Reading from the N-terminus, the 682-residue chain is DNA-directed RNA polymerase subunit beta' (682 aa).

Zn(2+) contacts are provided by Cys69, Cys71, Cys87, and Cys90. Positions 491, 493, and 495 each coordinate Mg(2+).

The protein belongs to the RNA polymerase beta' chain family. RpoC1 subfamily. As to quaternary structure, in plastids the minimal PEP RNA polymerase catalytic core is composed of four subunits: alpha, beta, beta', and beta''. When a (nuclear-encoded) sigma factor is associated with the core the holoenzyme is formed, which can initiate transcription. Requires Mg(2+) as cofactor. Zn(2+) is required as a cofactor.

The protein resides in the plastid. Its subcellular location is the chloroplast. The catalysed reaction is RNA(n) + a ribonucleoside 5'-triphosphate = RNA(n+1) + diphosphate. Functionally, DNA-dependent RNA polymerase catalyzes the transcription of DNA into RNA using the four ribonucleoside triphosphates as substrates. This Lotus japonicus (Lotus corniculatus var. japonicus) protein is DNA-directed RNA polymerase subunit beta'.